A 1194-amino-acid polypeptide reads, in one-letter code: MVGLLLFFFPAIFLEVSLLPRSPGRKVLLAGASSQRSVARMDGDVIIGALFSVHHQPPAEKVPERKCGEIREQYGIQRVEAMFHTLDKINADPVLLPNITLGSEIRDSCWHSSVALEQSIEFIRDSLISIRDEKDGINRCLPDGQSLPPGRTKKPIAGVIGPGSSSVAIQVQNLLQLFDIPQIAYSATSIDLSDKTLYKYFLRVVPSDTLQARAMLDIVKRYNWTYVSAVHTEGNYGESGMDAFKELAAQEGLCIAHSDKIYSNAGEKSFDRLLRKLRERLPKARVVVCFCEGMTVRGLLSAMRRLGVVGEFSLIGSDGWADRDEVIEGYEVEANGGITIKLQSPEVRSFDDYFLKLRLDTNTRNPWFPEFWQHRFQCRLPGHLLENPNFKRICTGNESLEENYVQDSKMGFVINAIYAMAHGLQNMHHALCPGHVGLCDAMKPIDGSKLLDFLIKSSFIGVSGEEVWFDEKGDAPGRYDIMNLQYTEANRYDYVHVGTWHEGVLNIDDYKIQMNKSGVVRSVCSEPCLKGQIKVIRKGEVSCCWICTACKENEYVQDEFTCKACDLGWWPNADLTGCEPIPVRYLEWSNIESIIAIAFSCLGILVTLFVTLIFVLYRDTPVVKSSSRELCYIILAGIFLGYVCPFTLIAKPTTTSCYLQRLLVGLSSAMCYSALVTKTNRIARILAGSKKKICTRKPRFMSAWAQVIIASILISVQLTLVVTLIIMEPPMPILSYPSIKEVYLICNTSNLGVVAPLGYNGLLIMSCTYYAFKTRNVPANFNEAKYIAFTMYTTCIIWLAFVPIYFGSNYKIITTCFAVSLSVTVALGCMFTPKMYIIIAKPERNVRSAFTTSDVVRMHVGDGKLPCRSNTFLNIFRRKKAGAGNANSNGKSVSWSEPGGGQVPKGQHMWHRLSVHVKTNETACNQTAVIKPLTKSYQGSGKSLTFSDTSTKTLYNVEEEEDAQPIRFSPPGSPSMVVHRRVPSAATTPPLPSHLTAEETPLFLAEPALPKGLPPPLQQQQQPPPQQKSLMDQLQGVVSNFSTAIPDFHAVLAGPGGPGNGLRSLYPPPPPPQHLQMLPLQLSTFGEELVSPPADDDDDSERFKLLQEYVYEHEREGNTEEDELEEEEEDLQAASKLTPDDSPALTPPSPFRDSVASGSSVPSSPVSESVLCTPPNVSYASVILRDYKQSSSTL.

A signal peptide spans 1–18 (MVGLLLFFFPAIFLEVSL). The Extracellular segment spans residues 19-592 (LPRSPGRKVL…VRYLEWSNIE (574 aa)). A disulfide bridge links Cys-67 with Cys-109. L-glutamate is bound at residue Tyr-74. A glycan (N-linked (GlcNAc...) asparagine) is linked at Asn-98. L-glutamate is bound by residues Ser-165 and 186-188 (SAT). N-linked (GlcNAc...) asparagine glycosylation occurs at Asn-223. Tyr-236 contributes to the L-glutamate binding site. Cys-289 and Cys-291 are joined by a disulfide. Residue Asp-318 participates in L-glutamate binding. Cys-378 and Cys-394 are oxidised to a cystine. Asn-397 is a glycosylation site (N-linked (GlcNAc...) asparagine). Lys-409 is an L-glutamate binding site. A disulfide bridge connects residues Cys-432 and Cys-439. An N-linked (GlcNAc...) asparagine glycan is attached at Asn-515. The chain crosses the membrane as a helical span at residues 593–615 (SIIAIAFSCLGILVTLFVTLIFV). Residues 616–629 (LYRDTPVVKSSSRE) are Cytoplasmic-facing. Residues 630 to 650 (LCYIILAGIFLGYVCPFTLIA) traverse the membrane as a helical segment. At 651-658 (KPTTTSCY) the chain is on the extracellular side. An intrachain disulfide couples Cys-657 to Cys-746. Residues 659 to 680 (LQRLLVGLSSAMCYSALVTKTN) form a helical membrane-spanning segment. Residues 681–703 (RIARILAGSKKKICTRKPRFMSA) lie on the Cytoplasmic side of the membrane. Residues 704-727 (WAQVIIASILISVQLTLVVTLIIM) form a helical membrane-spanning segment. Topologically, residues 728 to 750 (EPPMPILSYPSIKEVYLICNTSN) are extracellular. A helical membrane pass occupies residues 751–772 (LGVVAPLGYNGLLIMSCTYYAF). Topologically, residues 773–785 (KTRNVPANFNEAK) are cytoplasmic. The chain crosses the membrane as a helical span at residues 786-807 (YIAFTMYTTCIIWLAFVPIYFG). Topologically, residues 808–815 (SNYKIITT) are extracellular. A helical transmembrane segment spans residues 816–840 (CFAVSLSVTVALGCMFTPKMYIIIA). Residues 841-1194 (KPERNVRSAF…RDYKQSSSTL (354 aa)) are Cytoplasmic-facing. At Ser-853 the chain carries Phosphoserine. Thr-871 is subject to Phosphothreonine. Positions 883-905 (AGNANSNGKSVSWSEPGGGQVPK) are disordered. The span at 885 to 895 (NANSNGKSVSW) shows a compositional bias: polar residues. Ser-894 and Ser-969 each carry phosphoserine. The disordered stretch occupies residues 1007–1030 (PALPKGLPPPLQQQQQPPPQQKSL). Positions 1012 to 1026 (GLPPPLQQQQQPPPQ) are enriched in pro residues. At Ser-1091 the chain carries Phosphoserine. A disordered region spans residues 1113–1173 (HEREGNTEED…SPVSESVLCT (61 aa)). The segment covering 1119 to 1131 (TEEDELEEEEEDL) has biased composition (acidic residues). Position 1142 is a phosphoserine (Ser-1142). Phosphothreonine is present on Thr-1146. Ser-1149 is subject to Phosphoserine. Positions 1154 to 1170 (SVASGSSVPSSPVSESV) are enriched in low complexity.

It belongs to the G-protein coupled receptor 3 family. In terms of assembly, homodimer; disulfide-linked. The PPXXF motif binds HOMER1, HOMER2 and HOMER3. Interacts with TAMALIN. Interacts with RYR1, RYR2, ITPR1, SHANK1 and SHANK3. Interacts with SIAH1. In terms of tissue distribution, detected in brain.

It is found in the cell membrane. The protein resides in the postsynaptic cell membrane. The protein localises to the cell projection. It localises to the dendrite. Signaling is inhibited by the antagonist LY341495. The LY341495 binding site partially overlaps with the glutamate binding site. Signaling is also inhibited by synthetic allosteric regulators, such as FITM (4-fluoro-N-(4-(6-(isopropylamino)pyrimidin-4-yl)thiazol-2-yl)-N-methylbenzamide) that bind in a pocket between the transmembrane helices. In terms of biological role, G-protein coupled receptor for glutamate. Ligand binding causes a conformation change that triggers signaling via guanine nucleotide-binding proteins (G proteins) and modulates the activity of down-stream effectors. Signaling activates a phosphatidylinositol-calcium second messenger system. May participate in the central action of glutamate in the CNS, such as long-term potentiation in the hippocampus and long-term depression in the cerebellum. May function in the light response in the retina. Induces GRID1 and GRID2 cation-channel activation via GNAQ-PLC-PKC pathway in dopaminergic neurons and cerebellar Purkinje cell, respectively. This is Metabotropic glutamate receptor 1 (GRM1) from Homo sapiens (Human).